The following is a 536-amino-acid chain: CTP synthase (536 aa).

The amidoligase domain stretch occupies residues 1–267 (MSKFVFVTGG…CKETLRCLDL (267 aa)). Residue Ser-13 coordinates CTP. Residue Ser-13 coordinates UTP. ATP contacts are provided by residues 14–19 (SIGKGI) and Asp-71. Positions 71 and 141 each coordinate Mg(2+). CTP is bound by residues 148-150 (DIE), 188-193 (KTKPTQ), and Lys-224. Residues 188 to 193 (KTKPTQ) and Lys-224 contribute to the UTP site. The region spanning 292 to 534 (KVALVGKYIE…IKASREKLEQ (243 aa)) is the Glutamine amidotransferase type-1 domain. Gly-354 serves as a coordination point for L-glutamine. Cys-381 acts as the Nucleophile; for glutamine hydrolysis in catalysis. L-glutamine is bound by residues 382-385 (LGMQ), Glu-405, and Arg-462. Active-site residues include His-507 and Glu-509.

It belongs to the CTP synthase family. Homotetramer.

It catalyses the reaction UTP + L-glutamine + ATP + H2O = CTP + L-glutamate + ADP + phosphate + 2 H(+). The enzyme catalyses L-glutamine + H2O = L-glutamate + NH4(+). It carries out the reaction UTP + NH4(+) + ATP = CTP + ADP + phosphate + 2 H(+). The protein operates within pyrimidine metabolism; CTP biosynthesis via de novo pathway; CTP from UDP: step 2/2. With respect to regulation, allosterically activated by GTP, when glutamine is the substrate; GTP has no effect on the reaction when ammonia is the substrate. The allosteric effector GTP functions by stabilizing the protein conformation that binds the tetrahedral intermediate(s) formed during glutamine hydrolysis. Inhibited by the product CTP, via allosteric rather than competitive inhibition. Functionally, catalyzes the ATP-dependent amination of UTP to CTP with either L-glutamine or ammonia as the source of nitrogen. Regulates intracellular CTP levels through interactions with the four ribonucleotide triphosphates. The polypeptide is CTP synthase (Prochlorococcus marinus (strain MIT 9515)).